Reading from the N-terminus, the 223-residue chain is Cytidylate kinase (223 aa).

Residue 11-19 (GPAGVGKST) participates in ATP binding.

The protein belongs to the cytidylate kinase family. Type 1 subfamily.

The protein localises to the cytoplasm. The catalysed reaction is CMP + ATP = CDP + ADP. The enzyme catalyses dCMP + ATP = dCDP + ADP. The chain is Cytidylate kinase from Maridesulfovibrio salexigens (strain ATCC 14822 / DSM 2638 / NCIMB 8403 / VKM B-1763) (Desulfovibrio salexigens).